An 806-amino-acid polypeptide reads, in one-letter code: Leucine--tRNA ligase (806 aa).

The 'HIGH' region motif lies at 38–48; sequence PYPSGEIHMGH. A 'KMSKS' region motif is present at residues 572–576; that stretch reads KMSKS. Residue lysine 575 participates in ATP binding.

The protein belongs to the class-I aminoacyl-tRNA synthetase family.

The protein resides in the cytoplasm. The catalysed reaction is tRNA(Leu) + L-leucine + ATP = L-leucyl-tRNA(Leu) + AMP + diphosphate. This chain is Leucine--tRNA ligase, found in Helicobacter acinonychis (strain Sheeba).